The chain runs to 290 residues: Ribosomal RNA small subunit methyltransferase A (290 aa).

Asparagine 27, leucine 29, glycine 54, glutamate 75, aspartate 100, and asparagine 125 together coordinate S-adenosyl-L-methionine.

This sequence belongs to the class I-like SAM-binding methyltransferase superfamily. rRNA adenine N(6)-methyltransferase family. RsmA subfamily.

Its subcellular location is the cytoplasm. It catalyses the reaction adenosine(1518)/adenosine(1519) in 16S rRNA + 4 S-adenosyl-L-methionine = N(6)-dimethyladenosine(1518)/N(6)-dimethyladenosine(1519) in 16S rRNA + 4 S-adenosyl-L-homocysteine + 4 H(+). Its function is as follows. Specifically dimethylates two adjacent adenosines (A1518 and A1519) in the loop of a conserved hairpin near the 3'-end of 16S rRNA in the 30S particle. May play a critical role in biogenesis of 30S subunits. The polypeptide is Ribosomal RNA small subunit methyltransferase A (Streptococcus thermophilus (strain ATCC BAA-250 / LMG 18311)).